A 593-amino-acid chain; its full sequence is Insulin-like growth factor 2 mRNA-binding protein 3-B (593 aa).

2 RRM domains span residues 2–75 (NKLY…HSVP) and 81–156 (RKLQ…YIPD). A disordered region spans residues 159–208 (ATPQSPSQQLQQPQQQHPQGRRGFGQRGPARQGSPGAAARPKPQSEVPLR). The segment covering 161–176 (PQSPSQQLQQPQQQHP) has biased composition (low complexity). KH domains lie at 204–269 (EVPL…CKII) and 285–352 (EIPL…EEEV). Low complexity predominate over residues 390 to 402 (SGMPPPSAGVSSP). The disordered stretch occupies residues 390–412 (SGMPPPSAGVSSPTTSASYPPFG). KH domains are found at residues 417-482 (SETV…QGRI) and 499-565 (KLEA…QRKI). Residues 571-593 (QVRRQQQQQQKTAQSGQPQPRRK) are disordered.

The protein belongs to the RRM IMP/VICKZ family. In terms of assembly, homodimer and multimer. Associates with microtubules. Interaction with a translocation machinery protein TRAPA of the endoplasmic reticulum. Component of a mRNP complex, at least composed of DAZAP1, IGF2BP3, STAU and VgRBP60. The mRNP complex with DAZAP1, IGF2BP3, STAU and VgRBP60 is only found in the cytoplasm. Interacts with a hnRNP 1 related RNA transport protein VgRBP60 both in the nucleus (in an RNA-independent manner) and the cytoplasm (in an RNA-dependent manner). Found in a B3 activator complex. In terms of tissue distribution, expressed in oocytes, kidney and pancreas (at protein level). Expressed in oocytes, kidney and pancreas.

It is found in the nucleus. The protein resides in the cytoplasm. Its subcellular location is the endoplasmic reticulum. In terms of biological role, RNA-binding protein that acts as a regulator of mRNA transport and localization. Binds to the RNA sequence motif 5'-UUCAC-3'. Preferentially binds to N6-methyladenosine (m6A)-containing mRNAs and increases their stability. Mediates the specific association of Vg1 RNA to microtubules. May regulate mRNA translation. Binds specifically to the vegetal localization elements (VLE or VgLE) in the 3'-UTR of Vg1 and VegT mRNAs. Binds to the Vg1 and VegT mRNAs in both the nucleus and the cytoplasm. May regulate mRNA translation. Acts as a transcription regulator. Binds to the 5'-[TA]GGTTACT-3' motif within element 3 of the TFIIIA gene promoter. This chain is Insulin-like growth factor 2 mRNA-binding protein 3-B (igf2bp3-b), found in Xenopus laevis (African clawed frog).